The primary structure comprises 268 residues: MEVPLYNLQASQVGNIELPPQFNEKIRFDVIKRAFLAIQSHKRQPYGASPIAGKQHSAWTSKRRRSWRTSYGRGISRVSRAILRRHGALFYWVARNIAQAVKGKKAHPPKAEKDWYEKINKKERRLAIRSALAATKELDLVKARGHIIDKPVPIVVDGLEQLRKTKEIQQLLLKLGLEKELERVYEIKRRAGKGKRRGRAYIERKGPLIVVNDYNEQLFKAVDNIPGLDIEEVPNLNVELLAPGAKPGRLLIISKDALETLRERKLFF.

Belongs to the universal ribosomal protein uL4 family. In terms of assembly, part of the 50S ribosomal subunit.

One of the primary rRNA binding proteins, this protein initially binds near the 5'-end of the 23S rRNA. It is important during the early stages of 50S assembly. It makes multiple contacts with different domains of the 23S rRNA in the assembled 50S subunit and ribosome. Its function is as follows. Forms part of the polypeptide exit tunnel. The chain is Large ribosomal subunit protein uL4 from Nanoarchaeum equitans (strain Kin4-M).